The following is a 318-amino-acid chain: Ubiquinol oxidase (318 aa).

A helical membrane pass occupies residues 150–170 (VVVLETVAAIPGMVGGMFRHL). Residues E154, E193, and H196 each contribute to the Fe cation site. The chain crosses the membrane as a helical span at residues 212–232 (MLIKLGQFLFFNGYMVFYFVA). 3 residues coordinate Fe cation: E244, E295, and H298.

This sequence belongs to the alternative oxidase family. In terms of assembly, found as monomers and homodimers. Fe cation serves as cofactor.

It is found in the mitosome membrane. It carries out the reaction 2 a ubiquinol + O2 = 2 a ubiquinone + 2 H2O. Functionally, alternative oxidase which function may be to reoxidize reducing equivalents produced by glycolysis such as ubiquinol. The chain is Ubiquinol oxidase (AOX) from Trachipleistophora hominis (Microsporidian parasite).